Consider the following 381-residue polypeptide: EPS I polysaccharide export outer membrane protein EpsA (381 aa).

The signal sequence occupies residues 1-23 (MFVSIPNIRKAVVSLSVVPLLAA). A lipid anchor (N-palmitoyl cysteine) is attached at Cys24. The S-diacylglycerol cysteine moiety is linked to residue Cys24.

Belongs to the BexD/CtrA/VexA family.

It is found in the cell outer membrane. Functionally, probably involved in polymerization and/or export of exopolysaccharide EPS I which functions as a virulence factor. In Ralstonia nicotianae (strain ATCC BAA-1114 / GMI1000) (Ralstonia solanacearum), this protein is EPS I polysaccharide export outer membrane protein EpsA (epsA).